A 366-amino-acid chain; its full sequence is Gelsolin-like protein 2 (366 aa).

3 Gelsolin-like repeats span residues N55–L139, K177–Y252, and K286–K327. The segment at K100–L116 is actin binding. The segment at D104–C107 is actin-actin interfilament contact point.

This sequence belongs to the villin/gelsolin family. In terms of assembly, interacts with actin monomers and filaments. As to expression, expressed in circular and longitudinal muscle, pseudohearts, pharynx and gizzard. Not expressed in seminal vesicles.

It is found in the cytoplasm. The protein localises to the cytoskeleton. Calcium-regulated protein that binds to the plus (or barbed) ends of actin monomers or filaments, preventing monomer exchange (end-blocking or capping). Can promote the assembly of monomers into filaments (nucleation) as well as sever existing filaments. This chain is Gelsolin-like protein 2, found in Lumbricus terrestris (Common earthworm).